The primary structure comprises 152 residues: Smith-Magenis syndrome chromosomal region candidate gene 5 protein homolog (152 aa).

Positions 41–77 (TPCAGPSSQAPPQPPQASPPAAPDHSRTPSLLASSHS) are disordered. Positions 49-62 (QAPPQPPQASPPAA) are enriched in pro residues.

The chain is Smith-Magenis syndrome chromosomal region candidate gene 5 protein homolog (SMCR5) from Macaca fascicularis (Crab-eating macaque).